Reading from the N-terminus, the 141-residue chain is 16 kDa protein (141 aa).

Residues 97-119 (ASATVKKSHKSKPSKKKFKERKD) are disordered. A compositionally biased stretch (basic residues) spans 102–115 (KKSHKSKPSKKKFK).

The polypeptide is 16 kDa protein (Beta vulgaris (Sugar beet)).